The sequence spans 783 residues: BMP/retinoic acid-inducible neural-specific protein 2 (783 aa).

Positions Met-1–Ala-33 are cleaved as a signal peptide. Positions Arg-85–Thr-281 constitute an MACPF domain. N-linked (GlcNAc...) asparagine glycosylation is found at Asn-185, Asn-354, Asn-473, Asn-579, Asn-626, and Asn-658.

Belongs to the BRINP family.

Its subcellular location is the secreted. Functionally, inhibits neuronal cell proliferation by negative regulation of the cell cycle transition. The polypeptide is BMP/retinoic acid-inducible neural-specific protein 2 (BRINP2) (Pongo abelii (Sumatran orangutan)).